The primary structure comprises 213 residues: Orotate phosphoribosyltransferase (213 aa).

Lysine 26 is a 5-phospho-alpha-D-ribose 1-diphosphate binding site. 34–35 (FF) provides a ligand contact to orotate. Residues 72-73 (YK), arginine 98, lysine 99, lysine 102, histidine 104, and 123-131 (DDVISAGTS) contribute to the 5-phospho-alpha-D-ribose 1-diphosphate site. Orotate-binding residues include serine 127 and arginine 155.

Belongs to the purine/pyrimidine phosphoribosyltransferase family. PyrE subfamily. Homodimer. It depends on Mg(2+) as a cofactor.

It catalyses the reaction orotidine 5'-phosphate + diphosphate = orotate + 5-phospho-alpha-D-ribose 1-diphosphate. The protein operates within pyrimidine metabolism; UMP biosynthesis via de novo pathway; UMP from orotate: step 1/2. Its function is as follows. Catalyzes the transfer of a ribosyl phosphate group from 5-phosphoribose 1-diphosphate to orotate, leading to the formation of orotidine monophosphate (OMP). The polypeptide is Orotate phosphoribosyltransferase (Neisseria meningitidis serogroup C (strain 053442)).